Here is a 1131-residue protein sequence, read N- to C-terminus: Probable secreted beta-glucosidase adg3 (1131 aa).

Positions 1 to 23 (MPSKIEKICLLLLGFTAASNVNA) are cleaved as a signal peptide. Asparagine 58, asparagine 123, asparagine 252, asparagine 551, asparagine 593, asparagine 631, and asparagine 689 each carry an N-linked (GlcNAc...) asparagine glycan. The segment at 609–819 (GTTSSTSEIV…SSPISSNSVT (211 aa)) is disordered. Positions 623–715 (SNSNTGSLNG…YSDPTTTITS (93 aa)) are enriched in low complexity. Polar residues predominate over residues 716–725 (EVSSILSSPT). The span at 726–737 (SMQSSVSRPQSS) shows a compositional bias: low complexity. Residues 738 to 763 (GDASGFNTIFTSISQSSDGETSGYTI) are compositionally biased toward polar residues. 2 stretches are compositionally biased toward low complexity: residues 764-773 (SSNSSQNSAS) and 780-819 (TSSS…NSVT). Asparagine 766, asparagine 806, and asparagine 857 each carry an N-linked (GlcNAc...) asparagine glycan. A compositionally biased stretch (low complexity) spans 893–909 (STSNSGSTSYSIPSSSS). The interval 893–918 (STSNSGSTSYSIPSSSSRNEGTTSYS) is disordered. N-linked (GlcNAc...) asparagine glycosylation occurs at asparagine 920. Residues 977 to 1027 (LTVKPESSLSSSTTSGLTSSSSTIPSSTRSESNSESASTSSASKRSSSSTS) are compositionally biased toward low complexity. Residues 977–1031 (LTVKPESSLSSSTTSGLTSSSSTIPSSTRSESNSESASTSSASKRSSSSTSLVQS) form a disordered region.

It belongs to the SUN family.

The protein localises to the secreted. Functionally, cell surface beta-glucosidase involved in cell wall biogenesis,. In Schizosaccharomyces pombe (strain 972 / ATCC 24843) (Fission yeast), this protein is Probable secreted beta-glucosidase adg3 (adg3).